Reading from the N-terminus, the 680-residue chain is MLTHKTCQARKKMQVSFVIRDAEEKQHRNGVNSLQLDPNNGKLYSAGRDAIIRVWNTRSESSEKYIQSMEHHNDWVNDIVLCCNGRNLISASCDTTVKVWNAQKGFCMSTLRTHRDYVQALAYAKDREQVASAGLDKAIFLWDVNTLTALTASNNTVTTSSLTGSKDSIYSLAMNPSGTVIVSGSTENILRIWDPRTCMRSMKLRGHTENVRCLVVSPDGNQVVSGSSDGTIKVWNLGQQRCVQTIHVHKEGVWSLLMSENFQYIISGSRDQNIIVTEMRNPSNKTLVCEEKAPVLSLGYNMDKTGVWATTWNSDIRCWKLPMYDRGTLNSSGGLDAQWTQGGTELACIKGGAAIKECTVLNDKRYILTKDSQDQVVLYDVLRVVKKDTLGPIDYEAEVKKRNKQVYIPNWFTVDLKTGMPTIVLGQEEVDCFSAWVSIEAGLPECVDPTTEIKINYGKLLLEALLEYWTPPHSIPQNELEPDMHGNGYFQVPKHTPVIFSEVGGRTVCRLLVRDAAGDSECTLLHETAPQWVTDVVIEKNIPKFLKIPFFLQPHPQMTKPERTKKDRLVANEFIQCRKVCEHVLEKVLNAETTPSGANANNSLQNSQSDGNSEGSQLPAEERIELSCNDVVVDPNMDLRTVRHFIWKQSTDLTFQYKTKQNFNYDGSIGDSLERVTRKY.

WD repeat units follow at residues 26–65, 71–110, 113–152, 164–203, 206–245, 248–287, 290–329, and 350–389; these read QHRN…SEKY, HHND…CMST, THRD…ALTA, GSKD…RSMK, GHTE…CVQT, VHKE…NKTL, EEKA…RGTL, and KGGA…KKDT. The segment at 594-618 is disordered; that stretch reads TPSGANANNSLQNSQSDGNSEGSQL. The span at 596–609 shows a compositional bias: low complexity; that stretch reads SGANANNSLQNSQS.

The protein belongs to the WD repeat WDR48 family. Catalytic component of the Usp12-46 deubiquitylase complex consisting of Usp12-46, Wdr20 and Uaf1; regulatory subunit that, together wtih Wdr20, stabilizes Usp12-46. The Usp12-46 deubiquitylase complex associates with arr/arrow; the interaction leads to deubiquitination and stabilization of arr/arrow.

Its function is as follows. Regulatory component of the Usp12-46 deubiquitylase complex. activates deubiquitination by increasing the catalytic turnover without increasing the affinity of deubiquitinating enzymes for the substrate. The complex deubiquitylates the wg/wingless-signaling receptor arr/arrow, which stabilizes the receptor and increases its concentration at the cell surface; this enhances the sensitivity of cells to wg/wingless-signal stimulation. This increases the amplitude and spatial range of the signaling response to the wg/wingless morphogen gradient, facilitating the precise concentration-dependent regulation of its target genes. Together with Wdr20 and Usp12-46 required for wg/wingless-mediated signaling in the wing imaginal disc and for wg/wingless-dependent regulation of intestinal stem cell proliferation. The polypeptide is WD repeat-containing protein 48 homolog (Drosophila persimilis (Fruit fly)).